Consider the following 360-residue polypeptide: Peptide chain release factor 1 (360 aa).

At Gln235 the chain carries N5-methylglutamine. Positions Glu284–Tyr312 are disordered.

This sequence belongs to the prokaryotic/mitochondrial release factor family. In terms of processing, methylated by PrmC. Methylation increases the termination efficiency of RF1.

The protein resides in the cytoplasm. Its function is as follows. Peptide chain release factor 1 directs the termination of translation in response to the peptide chain termination codons UAG and UAA. This is Peptide chain release factor 1 from Histophilus somni (strain 129Pt) (Haemophilus somnus).